A 33-amino-acid polypeptide reads, in one-letter code: Gaegurin-1 (33 aa).

A disulfide bridge links cysteine 27 with cysteine 33.

It belongs to the frog skin active peptide (FSAP) family. Brevinin subfamily. As to quaternary structure, monomer. As to expression, expressed by the skin glands.

The protein resides in the secreted. In terms of biological role, has a non-hemolytic activity. Has a broad spectrum of activity against both Gram-positive and Gram-negative bacteria, fungi and protozoa. The polypeptide is Gaegurin-1 (GGN1) (Glandirana rugosa (Japanese wrinkled frog)).